The primary structure comprises 600 residues: UPF0588 membrane protein C20F10.02c (600 aa).

Transmembrane regions (helical) follow at residues 409–429 (LSATMYFLYFSFVYRAMTSLV) and 437–457 (YHWLELWRVLFSFLDFVSVLI).

Belongs to the UPF0588 family.

It localises to the membrane. The chain is UPF0588 membrane protein C20F10.02c from Schizosaccharomyces pombe (strain 972 / ATCC 24843) (Fission yeast).